Here is a 1292-residue protein sequence, read N- to C-terminus: Kinesin-like protein KIN-12A (1292 aa).

The interval 1–86 (MKKHFTLPRN…LSAETATESG (86 aa)) is disordered. Residues 19–29 (PHSPNPSISKS) show a composition bias toward low complexity. The segment covering 62–71 (PLPPRPPPSN) has biased composition (pro residues). The region spanning 91–426 (GVKVIVRMKP…LRFAQRAKAI (336 aa)) is the Kinesin motor domain. Position 165-172 (165-172 (GQTGSGKT)) interacts with ATP. Microtubules-binding regions lie at residues 293–297 (SSRSH), 326–332 (VDLAGSE), and 375–379 (HIPYR). Residues 424–461 (KAIQNKAVVNEVMQDDVNFLRGVIHQLRDELQRMKNDG) are neck. Positions 677–724 (SVSPTIRNSRKSLKTSELSTASQKDSEGENLVTEAADPSPATSKKMNN) are disordered. 2 coiled-coil regions span residues 945–992 (EVLK…CYID) and 1047–1232 (SEEL…NQLV).

It belongs to the TRAFAC class myosin-kinesin ATPase superfamily. Kinesin family. KIN-12 subfamily. As to quaternary structure, homodimer and heterodimer with KIN12B. Interacts with TIO.

It localises to the cytoplasm. It is found in the cytoskeleton. Its subcellular location is the phragmoplast. In terms of biological role, plus-end directed kinesin-like motor enzyme that plays a critical role in the organization of phragmoplast microtubules during cytokinesis. Constitutes a signaling module in association with serine/threonine-protein kinase TIO that is required to support phragmoplast expansion and cell-plate growth in plant cells. Binds microtubules in an ATP-sensitive manner. This Arabidopsis thaliana (Mouse-ear cress) protein is Kinesin-like protein KIN-12A.